A 628-amino-acid chain; its full sequence is MRLSQLSHPNELHGLAISELEDVACQIRERHLQVVSTSGGHLGPGLGVVELTIALYQTLDLDVDKVIWDVGHQAYPHKLLTGRYNRFDSLRQQKGVAGYLKRTESKFDHFGAGHASTSISAALGMAIARDRKGEDYKCVAVIGDGALTGGMALEAINHAGHLPKTPLLVVLNDNDMSISPPVGALSTYLNRMRHSPPVQFISDSVQESVKNLPFMGDAIQEEFKSLTGSVRRLAVPSVGAVFEELGFTYMGPVDGHDIAELTRTFNAAHKVGGPVMVHVATTKGKGYPYAEADQVGYHAQSSFDLTTGKSIPSKTPKPPSFSKVFGQTLVKLCEQDSKIVGITAAMAEGTALNLLQKAIPDQYVDVGIAEQHAVTLAGGMACEGIKPVVAIYSTFLQRAYDQLIHDIGIQNLPVTFVLDRAGIVGADGPTHQGQYDISYLRCIPNFTVMAPKDESELQQMLVTCINHNGPSALRIPRGSGEGAALMEEGWESLEIGKAETLEEGENLLIIGYGSMVFPAIRTAAILKEFGVNSTVINARFIRPLDEDTIHEAAKRIGKVVTMEEGTLLGGFGSAVVESFNDNDIFVPTLRIGIPDKLVDHATPQQSKESLGLTPEMMADQIRNKFNFN.

Residues histidine 72 and glycine 113–alanine 115 each bind thiamine diphosphate. Aspartate 144 contacts Mg(2+). Residues glycine 145–alanine 146, asparagine 174, tyrosine 287, and glutamate 370 each bind thiamine diphosphate. Asparagine 174 is a Mg(2+) binding site.

The protein belongs to the transketolase family. DXPS subfamily. Homodimer. Mg(2+) is required as a cofactor. Requires thiamine diphosphate as cofactor.

The catalysed reaction is D-glyceraldehyde 3-phosphate + pyruvate + H(+) = 1-deoxy-D-xylulose 5-phosphate + CO2. Its pathway is metabolic intermediate biosynthesis; 1-deoxy-D-xylulose 5-phosphate biosynthesis; 1-deoxy-D-xylulose 5-phosphate from D-glyceraldehyde 3-phosphate and pyruvate: step 1/1. Catalyzes the acyloin condensation reaction between C atoms 2 and 3 of pyruvate and glyceraldehyde 3-phosphate to yield 1-deoxy-D-xylulose-5-phosphate (DXP). The sequence is that of 1-deoxy-D-xylulose-5-phosphate synthase from Prochlorococcus marinus (strain NATL2A).